The following is a 274-amino-acid chain: Rhamnulose-1-phosphate aldolase (274 aa).

Residue glutamate 117 is part of the active site. Zn(2+) is bound by residues histidine 141, histidine 143, and histidine 212.

It belongs to the aldolase class II family. RhaD subfamily. In terms of assembly, homotetramer. The cofactor is Zn(2+).

The protein localises to the cytoplasm. The enzyme catalyses L-rhamnulose 1-phosphate = (S)-lactaldehyde + dihydroxyacetone phosphate. Its pathway is carbohydrate degradation; L-rhamnose degradation; glycerone phosphate from L-rhamnose: step 3/3. Its function is as follows. Catalyzes the reversible cleavage of L-rhamnulose-1-phosphate to dihydroxyacetone phosphate (DHAP) and L-lactaldehyde. The chain is Rhamnulose-1-phosphate aldolase from Escherichia coli O17:K52:H18 (strain UMN026 / ExPEC).